Consider the following 226-residue polypeptide: Translation initiation factor 6 (226 aa).

It belongs to the eIF-6 family.

Binds to the 50S ribosomal subunit and prevents its association with the 30S ribosomal subunit to form the 70S initiation complex. In Haloquadratum walsbyi (strain DSM 16790 / HBSQ001), this protein is Translation initiation factor 6.